A 150-amino-acid polypeptide reads, in one-letter code: Large ribosomal subunit protein bL9 (150 aa).

Belongs to the bacterial ribosomal protein bL9 family.

In terms of biological role, binds to the 23S rRNA. This chain is Large ribosomal subunit protein bL9, found in Pseudarthrobacter chlorophenolicus (strain ATCC 700700 / DSM 12829 / CIP 107037 / JCM 12360 / KCTC 9906 / NCIMB 13794 / A6) (Arthrobacter chlorophenolicus).